A 186-amino-acid polypeptide reads, in one-letter code: ATP synthase subunit delta (186 aa).

This sequence belongs to the ATPase delta chain family. F-type ATPases have 2 components, F(1) - the catalytic core - and F(0) - the membrane proton channel. F(1) has five subunits: alpha(3), beta(3), gamma(1), delta(1), epsilon(1). CF(0) has four main subunits: a(1), b(1), b'(1) and c(10-14). The alpha and beta chains form an alternating ring which encloses part of the gamma chain. F(1) is attached to F(0) by a central stalk formed by the gamma and epsilon chains, while a peripheral stalk is formed by the delta, b and b' chains.

The protein resides in the cell inner membrane. F(1)F(0) ATP synthase produces ATP from ADP in the presence of a proton or sodium gradient. F-type ATPases consist of two structural domains, F(1) containing the extramembraneous catalytic core and F(0) containing the membrane proton channel, linked together by a central stalk and a peripheral stalk. During catalysis, ATP synthesis in the catalytic domain of F(1) is coupled via a rotary mechanism of the central stalk subunits to proton translocation. Functionally, this protein is part of the stalk that links CF(0) to CF(1). It either transmits conformational changes from CF(0) to CF(1) or is implicated in proton conduction. In Rhodopseudomonas palustris (strain BisA53), this protein is ATP synthase subunit delta.